Here is a 138-residue protein sequence, read N- to C-terminus: Putative pre-16S rRNA nuclease (138 aa).

This sequence belongs to the YqgF nuclease family.

The protein resides in the cytoplasm. Its function is as follows. Could be a nuclease involved in processing of the 5'-end of pre-16S rRNA. The sequence is that of Putative pre-16S rRNA nuclease from Listeria innocua serovar 6a (strain ATCC BAA-680 / CLIP 11262).